Reading from the N-terminus, the 321-residue chain is WD repeat-containing protein VIP3 (321 aa).

WD repeat units lie at residues 12–55, 58–97, 100–140, 156–195, 198–238, 241–280, and 283–319; these read AHED…LVRT, GHSLGVAALAAHPSGIIAASSSIDSFVRVFDVDTNATIAV, APPS…LIST, SSKKFVLSVAWSPNGKRLACGSMDGTICVFDVDRSKLLHQ, GHNM…LLGS, GHTSWVLSVDASPDGGAIATGSSDRTVRLWDLKMRAAIQT, and NHNDQVWSVAFRPPGGTGVRAGRLASVSDDKSVSLYD.

In terms of assembly, component of the nuclear PAF1 complex (PAF1C), which consists of VIP2/ELF7/PAF1, VIP3/SKI8/WDR61, VIP4/LEO1, VIP5/RTF1, VIP6/ELF8/CTR9 and CDC73. Component of the cytoplasmic SKI complex, which consists of SKI2, SKI3 and VIP3/SKI8. Interacts with VIP4 and VIP6.

It localises to the nucleus. The protein resides in the cytoplasm. Component of the PAF1 complex (PAF1C) which is involved in histone modifications such as methylation on histone H3 'Lys-4' (H3K4me3). Involved in regulation of flowering time. Required for the expression of the flowering repressor and MADS box gene FLC. Required for histone H3 trimethylation on 'Lys-4' (H3K4me3) and histone dimethylation on 'Lys-36' (H3K36me2) at the FLC locus. Prevents trimethylation on 'Lys-27' (H3K27me3) at the same locus. Not required for meiotic recombination or progression. Component of the SKI complex which is thought to be involved in exosome-mediated RNA decay and associates with transcriptionally active genes in a manner dependent on PAF1 complex (PAF1C). Required for proper progression of cell differentiation process. In Arabidopsis thaliana (Mouse-ear cress), this protein is WD repeat-containing protein VIP3.